A 1520-amino-acid polypeptide reads, in one-letter code: MKIRIVSLIVLGFLIGCKHESIITPTVPADGSGGNALNPGLVGGYLPDIGVPDPIISLSMTLDGNLKFDSSLLCNDQDASHFQISQKDNVFCTINGRSIATFTAPFDANKNGRNTDSEVLSLISADEYRDSPVRQENLQILMKNMATIHGDKISLVFRSTLDALTFENYLRHNLDLPKDQFLEAITEKIANDNQVDKQPSTHVPNISPSFTPGTSSNLNSPFVSANAEESLSYIPTDVIPSLGRLLDSQGRVINGVSYFSNNTRGITGVDKTGAILNDGSFEFSWGDIISFSIDTFELGSTRANKTDFYISELGKDNEGKNAEALIHRYASIDDSKLIIPDKVTQIFSLYPNVINEVISLSLPNGDIELDIGDGKTQIVPGEFFKQFDSGLAALIDQSISPISRFKFEDSLPKKKSAIDSESSQIQDIINKLWGATDTVQANGWKKVDRFHIFHDSTNFYGSTGSARAQAAVNIANSAFPVLMARNDNNYWIDFGKPKAWDSNSLAFITEAPSTVVPDKVSEDTSTFNLPFISLGEIGKGKLMVLGNARYNSVLVCPNGFSWGGTVKNGTCSLSSDRDDMANFFSNVIRYLTGSTSNDVIVGTNIPEVYFKSSGQTMGSKANFELDSRFSKQTQQLTSFHDLDVNTIPLIIINAYDYKGKNINSPYDIPLSADVGSPKLSRSDVTDLIDYINNGGSVLMMETIINTNNSEISRLLDSAGIAFGIGNSVVADGNGPSGGHPDRPRSQREHGIWVIERYAAVEDESSGQQTLPYVINSDGSIEWKYIVENRPDDKPKLEVASWVESEAGDKLITHYAFIDESQHWKKDISGKIIYNVAGKPEVDNASLSLAKNKVLDAFKNSSGQRAYSECKNSEFHYEINCLEYRPGNSIPITGGLYVPRYTDIKLGESEANAMVKAANLGTNIHALYQHERYFRTKGKSGARLNSVDLNRIYQNMSVWLWNDLDYRYDDKQSDELGFKVFTQYLNCYTSNNAGGNTTCPEELKDELTQLGMIYDEKSGSYAGQMDPSYPLNYMEKPLTRLMLGRSFWDLDIKVDVRKYPGEVTTRSGGGDITLDMRNNTAAWFAGNRQPTGQWAEAHQPFSVSVSGETSPVTITIALADDLTGREKHELGLKRPPRMSKSFVIGGDSPKMQTFTVPYGGLIYAQGGNSQQVKLTFSGTIDAPLYIDGKWRNPLLSGAPIGEVVSDTFIFTAPKANLNADGYLGGIEQFAKDLDQFSADLNDFYARDEGADGDKNRKATDKSMPNNRHHFVNDVAISVGAAHSGYPVMNDSFITSSRSLNTMPLNSWLLWHEVGHNSAEAPFNVDGATEVVNNLLALYMQDRHQGKMSRVEQDIRYAFDFVNAEHGHAWGAGGAGERLVMFAQLKEWAETEFDINDWYNDKLPGFYIEESGIKGWNLFKLMHRLMRNENDDQINMKGENQCKISGIGKSDLLMLCASYAAQTDLSEFFKAWNPGSKAFLYPDDPQPYYEGGITPSGIQRVKSLKLNLPQKNPLSINSVTQH.

The first 16 residues, 1–16, serve as a signal peptide directing secretion; it reads MKIRIVSLIVLGFLIG. A lipid anchor (N-palmitoyl cysteine) is attached at cysteine 17. Cysteine 17 is lipidated: S-diacylglycerol cysteine. In terms of domain architecture, Peptidase M60 spans 1085–1388; that stretch reads GNRQPTGQWA…MFAQLKEWAE (304 aa).

The protein localises to the cell membrane. This is Accessory colonization factor AcfD (acfD) from Vibrio cholerae serotype O1 (strain ATCC 39315 / El Tor Inaba N16961).